The sequence spans 335 residues: S-adenosylmethionine:tRNA ribosyltransferase-isomerase (335 aa).

It belongs to the QueA family. As to quaternary structure, monomer.

It localises to the cytoplasm. The catalysed reaction is 7-aminomethyl-7-carbaguanosine(34) in tRNA + S-adenosyl-L-methionine = epoxyqueuosine(34) in tRNA + adenine + L-methionine + 2 H(+). It participates in tRNA modification; tRNA-queuosine biosynthesis. Transfers and isomerizes the ribose moiety from AdoMet to the 7-aminomethyl group of 7-deazaguanine (preQ1-tRNA) to give epoxyqueuosine (oQ-tRNA). The protein is S-adenosylmethionine:tRNA ribosyltransferase-isomerase of Thermosipho africanus (strain TCF52B).